The primary structure comprises 149 residues: Calmodulin (149 aa).

Position 2 is an N-acetylalanine (Ala-2). EF-hand domains follow at residues 8-43 (EQIA…LGQN), 44-79 (PTEA…KMKD), 81-116 (DSEE…LGEK), and 117-149 (LTDE…MTAK). Asp-21, Asp-23, Asp-25, Thr-27, Glu-32, Asp-57, Asp-59, Asn-61, Thr-63, Glu-68, Asp-94, Asp-96, Asn-98, Tyr-100, and Glu-105 together coordinate Ca(2+). The residue at position 116 (Lys-116) is an N6,N6,N6-trimethyllysine. Residues Asp-130, Asp-132, Asp-134, Gln-136, and Glu-141 each coordinate Ca(2+).

This sequence belongs to the calmodulin family.

Functionally, calmodulin acts as part of a calcium signal transduction pathway by mediating the control of a large number of enzymes, ion channels, aquaporins and other proteins through calcium-binding. Calcium-binding is required for the activation of calmodulin. Among the enzymes to be stimulated by the calmodulin-calcium complex are a number of protein kinases, such as myosin light-chain kinases and calmodulin-dependent protein kinase type II (CaMK2), and phosphatases. In Oreochromis mossambicus (Mozambique tilapia), this protein is Calmodulin (calm).